Here is a 134-residue protein sequence, read N- to C-terminus: Holo-[acyl-carrier-protein] synthase (134 aa).

The Mg(2+) site is built by D8 and E57.

This sequence belongs to the P-Pant transferase superfamily. AcpS family. Requires Mg(2+) as cofactor.

The protein localises to the cytoplasm. It carries out the reaction apo-[ACP] + CoA = holo-[ACP] + adenosine 3',5'-bisphosphate + H(+). In terms of biological role, transfers the 4'-phosphopantetheine moiety from coenzyme A to a Ser of acyl-carrier-protein. The protein is Holo-[acyl-carrier-protein] synthase of Rhizobium johnstonii (strain DSM 114642 / LMG 32736 / 3841) (Rhizobium leguminosarum bv. viciae).